The following is a 261-amino-acid chain: Pyridoxine-5'-phosphate oxidase (261 aa).

42–45 (RGDP) provides a ligand contact to pyridoxal 5'-phosphate. 95 to 98 (RMVL) is a binding site for FMN. Lys-100 serves as a coordination point for pyridoxal 5'-phosphate. FMN contacts are provided by residues 110-111 (FT), 116-117 (RK), and Gln-139. Pyridoxal 5'-phosphate-binding residues include Tyr-157, Arg-161, and Ser-165. FMN is bound by residues 174-175 (QS) and Trp-219. 225 to 227 (RLH) contacts pyridoxal 5'-phosphate. Arg-229 lines the FMN pocket. Residue Thr-238 is modified to Phosphothreonine. The residue at position 241 (Ser-241) is a Phosphoserine.

This sequence belongs to the pyridoxamine 5'-phosphate oxidase family. In terms of assembly, homodimer. It depends on FMN as a cofactor.

It catalyses the reaction pyridoxamine 5'-phosphate + O2 + H2O = pyridoxal 5'-phosphate + H2O2 + NH4(+). The catalysed reaction is pyridoxine 5'-phosphate + O2 = pyridoxal 5'-phosphate + H2O2. It functions in the pathway cofactor metabolism; pyridoxal 5'-phosphate salvage; pyridoxal 5'-phosphate from pyridoxamine 5'-phosphate: step 1/1. It participates in cofactor metabolism; pyridoxal 5'-phosphate salvage; pyridoxal 5'-phosphate from pyridoxine 5'-phosphate: step 1/1. In terms of biological role, catalyzes the oxidation of either pyridoxine 5'-phosphate (PNP) or pyridoxamine 5'-phosphate (PMP) into pyridoxal 5'-phosphate (PLP). The polypeptide is Pyridoxine-5'-phosphate oxidase (PNPO) (Bos taurus (Bovine)).